Reading from the N-terminus, the 228-residue chain is Deoxyribose-phosphate aldolase (228 aa).

Catalysis depends on Asp-96, which acts as the Proton donor/acceptor. The Schiff-base intermediate with acetaldehyde role is filled by Lys-157. Residue Lys-185 is the Proton donor/acceptor of the active site.

This sequence belongs to the DeoC/FbaB aldolase family. DeoC type 1 subfamily.

Its subcellular location is the cytoplasm. The enzyme catalyses 2-deoxy-D-ribose 5-phosphate = D-glyceraldehyde 3-phosphate + acetaldehyde. The protein operates within carbohydrate degradation; 2-deoxy-D-ribose 1-phosphate degradation; D-glyceraldehyde 3-phosphate and acetaldehyde from 2-deoxy-alpha-D-ribose 1-phosphate: step 2/2. Functionally, catalyzes a reversible aldol reaction between acetaldehyde and D-glyceraldehyde 3-phosphate to generate 2-deoxy-D-ribose 5-phosphate. The sequence is that of Deoxyribose-phosphate aldolase from Cyanothece sp. (strain PCC 7425 / ATCC 29141).